The sequence spans 374 residues: S-adenosylmethionine synthase 2 (374 aa).

Mg(2+) is bound at residue Glu11. Residue His17 coordinates ATP. Glu45 contributes to the K(+) binding site. L-methionine is bound by residues Glu58 and Gln101. ATP-binding positions include 169–171, 237–240, Asp248, 254–255, Ala271, Lys275, and Lys279; these read DGK, SGRF, and RK. Asp248 is an L-methionine binding site. An L-methionine-binding site is contributed by Lys279.

Belongs to the AdoMet synthase family. In terms of assembly, homotetramer. Mn(2+) is required as a cofactor. Mg(2+) serves as cofactor. Requires Co(2+) as cofactor. It depends on K(+) as a cofactor. In terms of tissue distribution, expressed in vegetative and reproductive tissues.

The protein resides in the cytoplasm. The enzyme catalyses L-methionine + ATP + H2O = S-adenosyl-L-methionine + phosphate + diphosphate. The protein operates within amino-acid biosynthesis; S-adenosyl-L-methionine biosynthesis; S-adenosyl-L-methionine from L-methionine: step 1/1. Its function is as follows. Catalyzes the formation of S-adenosylmethionine from methionine and ATP. The reaction comprises two steps that are both catalyzed by the same enzyme: formation of S-adenosylmethionine (AdoMet) and triphosphate, and subsequent hydrolysis of the triphosphate. The sequence is that of S-adenosylmethionine synthase 2 (SAMS2) from Pisum sativum (Garden pea).